A 95-amino-acid polypeptide reads, in one-letter code: Immunogenic miracidial antigen 8C (95 aa).

Polar residues predominate over residues 1-15 (EFTISFSSPVISTGQ). The interval 1–95 (EFTISFSSPV…PKKYGSGHKY (95 aa)) is disordered. Positions 20–41 (GDEDYHDGDDDVDYTDDVDDVD) are enriched in acidic residues. Residues 45 to 59 (GSPSQLLQGGYQRNQ) are compositionally biased toward polar residues.

This sequence belongs to the immunogenic miracidial antigen family.

In Schistosoma japonicum (Blood fluke), this protein is Immunogenic miracidial antigen 8C (8C).